The sequence spans 982 residues: Serine/threonine-protein kinase ATG1 (982 aa).

Positions 19–324 (FVIGAEIGKG…FENFFAHPVI (306 aa)) constitute a Protein kinase domain. ATP contacts are provided by residues 25-33 (IGKGSFAQV) and Lys48. Residue Asp162 is the Proton acceptor of the active site. 4 disordered regions span residues 334–506 (DDIP…REKA), 813–834 (RLPDDHPSHPSNHPQGSESVNG), 898–918 (PKRRLSANMDDSGGDGEDGHA), and 947–982 (RMISNASKAQQQSQPQSLIRRRSGDVTPRSVPSYSS). Composition is skewed to basic and acidic residues over residues 335 to 359 (DIPKPEASEQRSSSKDTRAASKSDD) and 372 to 387 (HPTDNDQIRDQFRRVE). Over residues 388-398 (PPSSAAESAPS) the composition is skewed to low complexity. The segment covering 463 to 481 (SNASLNRSNRESSSPTSAA) has biased composition (polar residues).

The protein belongs to the protein kinase superfamily. Ser/Thr protein kinase family. APG1/unc-51/ULK1 subfamily. As to quaternary structure, homodimer. Forms a ternary complex with ATG13 and ATG17. In terms of tissue distribution, uniformly detected in conidia, mycelia and appressoria (at protein level).

Its subcellular location is the cytoplasm. It localises to the preautophagosomal structure membrane. It catalyses the reaction L-seryl-[protein] + ATP = O-phospho-L-seryl-[protein] + ADP + H(+). It carries out the reaction L-threonyl-[protein] + ATP = O-phospho-L-threonyl-[protein] + ADP + H(+). Its function is as follows. Serine/threonine protein kinase involved in the cytoplasm to vacuole transport (Cvt) and found to be essential in autophagy, where it is required for the formation of autophagosomes. Involved in the clearance of protein aggregates which cannot be efficiently cleared by the proteasome. Required for selective autophagic degradation of the nucleus (nucleophagy) as well as for mitophagy which contributes to regulate mitochondrial quantity and quality by eliminating the mitochondria to a basal level to fulfill cellular energy requirements and preventing excess ROS production. Also involved in endoplasmic reticulum-specific autophagic process, in selective removal of ER-associated degradation (ERAD) substrates. Plays a key role in ATG9 and ATG23 cycling through the pre-autophagosomal structure and is necessary to promote ATG18 binding to ATG9 through phosphorylation of ATG9. Catalyzes phosphorylation of ATG4, decreasing the interaction between ATG4 and ATG8 and impairing deconjugation of PE-conjugated forms of ATG8. Autophagy is essential to fungal development, production of appressorium turgor, and pathogenicity in rice blast disease. In Pyricularia oryzae (strain 70-15 / ATCC MYA-4617 / FGSC 8958) (Rice blast fungus), this protein is Serine/threonine-protein kinase ATG1.